The following is a 287-amino-acid chain: MSWDPNPVPRTLRCWRLRRASETALQSSRRAVEDQLKICGHRRDADVFELFLSKKELTEVIDLSRFKKLKYLWLHHNKLHGITFLTRNYCLTELYLNNNAIFEIEGLHYLPSLHILLLHHNELTNIDATVKELKGMLNLKILSLYQNPLCQYNLYRLYIIYHLPGVELLDRNQVTEKERRSMITIFNHKKAHIVQSIAFGGKVDASWDPKSPFKQKPAQRVPSDFAFANNVDKTVLDDPEDAVFVRSMKRSVMTLTSMNWDTVPTREERYLEEEGTETAQMLTVTLR.

LRR repeat units follow at residues 46–67, 68–89, 90–111, and 112–133; these read DVFE…SRFK, KLKY…TRNY, CLTE…HYLP, and SLHI…VKEL. Residues 147–185 form the LRRCT domain; it reads NPLCQYNLYRLYIIYHLPGVELLDRNQVTEKERRSMITI.

In Homo sapiens (Human), this protein is Leucine-rich repeat-containing protein 72 (LRRC72).